Here is a 454-residue protein sequence, read N- to C-terminus: MSTTDTIVAQATPPGRGGVGILRVSGRAASEVAHAVLGKLPKPRYADYLPFKDVDGSTLDQGIALYFPGPNSFTGEDVLELQGHGGPVILDLLLKRILALPGLRIARPGEFSERAFLNDKLDLAQAEAIADLIDASSEQAARSAVNSLQGAFSARIHQLVEALTHLRIYVEAAIDFPDEEIDFLSDGKIEGQLNGVMADLEQVRTEARQGSLLREGMKVVIAGRPNAGKSSLLNALAGREAAIVTDIAGTTRDVLREHIHIDGMPLHIIDTAGLREANDEVERIGIERAWNEIEQADRVLFMVDGTTTDATEPAAIWPEFMARLPATLPITVVRNKADITGETLGLTEVNGHSLIRLSARTGEGIDLLRDHLKQSMGFTSNTEGGFLARRRHLQALETAARHLIQGHEQLVSAYAGELLAEELRLAQQSLSEITGEFSSDDLLGRIFSSFCIGK.

The (6S)-5-formyl-5,6,7,8-tetrahydrofolate site is built by R23, E80, and K120. In terms of domain architecture, TrmE-type G spans 216-377; that stretch reads GMKVVIAGRP…LRDHLKQSMG (162 aa). Residue N226 coordinates K(+). GTP is bound by residues 226-231, 245-251, 270-273, 335-338, and 358-360; these read NAGKSS, TDIAGTT, DTAG, NKAD, and SAR. S230 is a binding site for Mg(2+). Residues T245, I247, and T250 each coordinate K(+). T251 serves as a coordination point for Mg(2+). (6S)-5-formyl-5,6,7,8-tetrahydrofolate is bound at residue K454.

It belongs to the TRAFAC class TrmE-Era-EngA-EngB-Septin-like GTPase superfamily. TrmE GTPase family. In terms of assembly, homodimer. Heterotetramer of two MnmE and two MnmG subunits. K(+) is required as a cofactor.

It localises to the cytoplasm. In terms of biological role, exhibits a very high intrinsic GTPase hydrolysis rate. Involved in the addition of a carboxymethylaminomethyl (cmnm) group at the wobble position (U34) of certain tRNAs, forming tRNA-cmnm(5)s(2)U34. This Yersinia pseudotuberculosis serotype O:3 (strain YPIII) protein is tRNA modification GTPase MnmE.